The chain runs to 67 residues: Large ribosomal subunit protein bL32 (67 aa).

Basic residues predominate over residues 1-19 (MAVPKRKMSRSNTRARRSQ). The segment at 1 to 21 (MAVPKRKMSRSNTRARRSQWK) is disordered.

This sequence belongs to the bacterial ribosomal protein bL32 family.

In Clavibacter sepedonicus (Clavibacter michiganensis subsp. sepedonicus), this protein is Large ribosomal subunit protein bL32.